The primary structure comprises 85 residues: Large ribosomal subunit protein bL27 (85 aa).

This sequence belongs to the bacterial ribosomal protein bL27 family.

This is Large ribosomal subunit protein bL27 from Vesicomyosocius okutanii subsp. Calyptogena okutanii (strain HA).